Consider the following 1648-residue polypeptide: eIF-2-alpha kinase GCN2 (1648 aa).

Residues 1-26 (MAGGRGASGRGRAEPQESYSQRQDHE) are disordered. The RWD domain occupies 25–137 (HELQALEAIY…HHVQSFLSEH (113 aa)). A coiled-coil region spans residues 146–205 (HEEMLERQAQEKQQRLLEARRKEEQEQREILHEIQRRKEEIKEEKKRKEMAKQERLEITS). Serine 230 carries the phosphoserine modification. Protein kinase domains follow at residues 286-538 (VGSD…HSFI) and 589-1000 (FEEL…SELL). ATP is bound by residues 595–603 (LGKGAFGAV) and lysine 618. Residues 661–784 (PAVPGTPPPD…CNQKDGSHEI (124 aa)) are disordered. Threonine 666 is modified (phosphothreonine). Polar residues-rich tracts occupy residues 673-686 (PQAQ…GKTS) and 704-722 (LSSS…STRF). Composition is skewed to acidic residues over residues 730–739 (SSDEEDEDER) and 753–763 (SDSDIIFDNED). The span at 775-784 (CNQKDGSHEI) shows a compositional bias: basic and acidic residues. Aspartate 846 acts as the Proton acceptor in catalysis. Threonine 869 bears the Phosphothreonine mark. Residues threonine 898 and threonine 903 each carry the phosphothreonine; by autocatalysis modification. The segment at 1021-1492 (IDGKAYRTMM…DHVMQKLRTK (472 aa)) is histidyl-tRNA synthetase-like. An N6-acetyllysine modification is found at lysine 1258.

Belongs to the protein kinase superfamily. Ser/Thr protein kinase family. GCN2 subfamily. In terms of assembly, homodimer; homodimerization is important for kinase activation by uncharged tRNAs. Interacts with GCN1; this interaction stimulates EIF2AK4/GCN2 kinase activity and is impaired by IMPACT upon a variety of stress conditions, such as amino acid depletion, UV-C irradiation, proteasome inhibitor treatment and glucose deprivation. Interacts with DNAJC3; this interaction inhibits EIF2AK4/GCN2 kinase activity during endoplasmic reticulum (ER), hypothermic and amino acid-starving stress conditions. Interacts with MAP3K20; activates EIF2AK4/GCN2 kinase activity in response to moderate ribotoxic stress. Post-translationally, autophosphorylated; autophosphorylation on Thr-898 is increased upon amino acid starvation and in UV irradiation cells and inhibited in presence of IMPACT. Expressed in liver. Expressed predominantly in the hippocampal CA1 region and the dentate gyrus, and to a lesser degree in CA3 (at protein level). Expressed in liver, lung, brain, kidney, skeletal muscle and testis. Expressed weakly in heart and spleen. Expressed in the hippocampal CA1 and CA3 regions, the dentate gyrus and cerebellum. Isoform 1 is widely expressed. Isoform 1 is expressed in brain, liver, skeletal muscle and testis. Isoform 3 is expressed in lung, brain, testis, prostate and choroid plexus. Isoform 4 is expressed in muscle, lung, kidney, brain, testis and prostate.

Its subcellular location is the cytoplasm. The catalysed reaction is L-seryl-[protein] + ATP = O-phospho-L-seryl-[protein] + ADP + H(+). It catalyses the reaction L-threonyl-[protein] + ATP = O-phospho-L-threonyl-[protein] + ADP + H(+). With respect to regulation, (Microbial infection) Kinase activity is enhanced by alphavirus genomic RNA sequences. Kinase activity is stimulated upon binding to uncharged tRNAs. Activated by serum starvation (in vitro). Functionally, metabolic-stress sensing protein kinase that phosphorylates the alpha subunit of eukaryotic translation initiation factor 2 (EIF2S1/eIF-2-alpha) in response to low amino acid availability. Plays a role as an activator of the integrated stress response (ISR) required for adaptation to amino acid starvation. EIF2S1/eIF-2-alpha phosphorylation in response to stress converts EIF2S1/eIF-2-alpha into a global protein synthesis inhibitor, leading to a global attenuation of cap-dependent translation, and thus to a reduced overall utilization of amino acids, while concomitantly initiating the preferential translation of ISR-specific mRNAs, such as the transcriptional activator ATF4, and hence allowing ATF4-mediated reprogramming of amino acid biosynthetic gene expression to alleviate nutrient depletion. Required for the translational induction of protein kinase PRKCH following amino acid starvation. Binds uncharged tRNAs. Involved in cell cycle arrest by promoting cyclin D1 mRNA translation repression after the unfolded protein response pathway (UPR) activation or cell cycle inhibitor CDKN1A/p21 mRNA translation activation in response to amino acid deprivation. Plays a role in the consolidation of synaptic plasticity, learning as well as formation of long-term memory. Plays a role in neurite outgrowth inhibition. Plays a role in feeding behavior to maintain amino acid homeostasis; contributes to the innate aversion toward diets of imbalanced amino acid composition. Plays a proapoptotic role in response to glucose deprivation. Promotes global cellular protein synthesis repression in response to UV irradiation independently of the stress-activated protein kinase/c-Jun N-terminal kinase (SAPK/JNK) and p38 MAPK signaling pathways. Its function is as follows. (Microbial infection) Plays a role in the antiviral response against alphavirus infection; impairs early viral mRNA translation of the incoming genomic virus RNA, thus preventing alphavirus replication. In terms of biological role, (Microbial infection) Plays a role in modulating the adaptive immune response to Yellow fever virus infection; promotes dendritic cells to initiate autophagy and antigene presentation to both CD4(+) and CD8(+) T-cells under amino acid starvation. The chain is eIF-2-alpha kinase GCN2 from Mus musculus (Mouse).